A 364-amino-acid chain; its full sequence is Protein-glutamate methylesterase/protein-glutamine glutaminase (364 aa).

One can recognise a Response regulatory domain in the interval 5–123 (RVLVVDDTIL…PAANKAALAN (119 aa)). Position 56 is a 4-aspartylphosphate (Asp56). Residues 174–364 (EIVVIGISTG…QEIVHTVKLY (191 aa)) form the CheB-type methylesterase domain. Active-site residues include Ser181, His208, and Asp306.

The protein belongs to the CheB family. Phosphorylated by CheA. Phosphorylation of the N-terminal regulatory domain activates the methylesterase activity.

Its subcellular location is the cytoplasm. It carries out the reaction [protein]-L-glutamate 5-O-methyl ester + H2O = L-glutamyl-[protein] + methanol + H(+). The catalysed reaction is L-glutaminyl-[protein] + H2O = L-glutamyl-[protein] + NH4(+). Its function is as follows. Involved in chemotaxis. Part of a chemotaxis signal transduction system that modulates chemotaxis in response to various stimuli. Catalyzes the demethylation of specific methylglutamate residues introduced into the chemoreceptors (methyl-accepting chemotaxis proteins or MCP) by CheR. Also mediates the irreversible deamidation of specific glutamine residues to glutamic acid. This chain is Protein-glutamate methylesterase/protein-glutamine glutaminase, found in Desulfotalea psychrophila (strain LSv54 / DSM 12343).